The following is a 216-amino-acid chain: Flagellin B2 (216 aa).

Residues 1–12 constitute a propeptide that is removed on maturation; sequence MKIKEFMSNKKG. 6 N-linked (GlcNAc...) asparagine glycosylation sites follow: Asn-38, Asn-72, Asn-77, Asn-113, Asn-172, and Asn-208.

This sequence belongs to the archaeal flagellin family. Post-translationally, N-linked glycans consist of the 779 Da trisaccharide beta-ManNAc(Thr)-(1-4)-beta-GlcNAc3NAcA-(1-3)-beta-GlcNAc.

The protein resides in the archaeal flagellum. Functionally, flagellin is the subunit protein which polymerizes to form the filaments of archaeal flagella. This chain is Flagellin B2 (flaB2), found in Methanococcus voltae.